The following is a 445-amino-acid chain: tRNA modification GTPase MnmE (445 aa).

3 residues coordinate (6S)-5-formyl-5,6,7,8-tetrahydrofolate: Arg-24, Glu-81, and Lys-121. Residues 218 to 369 (GLTVVIAGPP…LLEALVGFAR (152 aa)) enclose the TrmE-type G domain. Residues 228 to 233 (NAGKST), 247 to 253 (SPHAGTT), 272 to 275 (DTAG), and 350 to 352 (SAR) each bind GTP. Residues Ser-232 and Thr-253 each coordinate Mg(2+). (6S)-5-formyl-5,6,7,8-tetrahydrofolate is bound at residue Lys-445.

It belongs to the TRAFAC class TrmE-Era-EngA-EngB-Septin-like GTPase superfamily. TrmE GTPase family. As to quaternary structure, homodimer. Heterotetramer of two MnmE and two MnmG subunits. The cofactor is K(+).

The protein localises to the cytoplasm. Functionally, exhibits a very high intrinsic GTPase hydrolysis rate. Involved in the addition of a carboxymethylaminomethyl (cmnm) group at the wobble position (U34) of certain tRNAs, forming tRNA-cmnm(5)s(2)U34. The polypeptide is tRNA modification GTPase MnmE (Bradyrhizobium sp. (strain BTAi1 / ATCC BAA-1182)).